The following is a 371-amino-acid chain: Ferrochelatase (371 aa).

Fe cation-binding residues include histidine 218 and glutamate 299.

Belongs to the ferrochelatase family.

It localises to the cytoplasm. It carries out the reaction heme b + 2 H(+) = protoporphyrin IX + Fe(2+). Its pathway is porphyrin-containing compound metabolism; protoheme biosynthesis; protoheme from protoporphyrin-IX: step 1/1. Functionally, catalyzes the ferrous insertion into protoporphyrin IX. The protein is Ferrochelatase of Cupriavidus metallidurans (strain ATCC 43123 / DSM 2839 / NBRC 102507 / CH34) (Ralstonia metallidurans).